The sequence spans 108 residues: Nucleoid-associated protein Bpet3552 (108 aa).

The protein belongs to the YbaB/EbfC family. Homodimer.

It is found in the cytoplasm. The protein resides in the nucleoid. Functionally, binds to DNA and alters its conformation. May be involved in regulation of gene expression, nucleoid organization and DNA protection. The polypeptide is Nucleoid-associated protein Bpet3552 (Bordetella petrii (strain ATCC BAA-461 / DSM 12804 / CCUG 43448)).